Here is a 746-residue protein sequence, read N- to C-terminus: Probably inactive copalyl diphosphate synthase 3 (746 aa).

A DXDD motif; degenerated motif is present at residues 331-334 (DVND).

Belongs to the terpene synthase family. Tpsc subfamily. As to expression, mostly expressed in stems, and, at low levels, in roots and leaves, but barely in flowers.

The sequence is that of Probably inactive copalyl diphosphate synthase 3 from Isodon rubescens (Rabdosia rubescens).